A 585-amino-acid polypeptide reads, in one-letter code: Zinc finger protein C11D3.17 (585 aa).

2 C2H2-type zinc fingers span residues 31–53 (FPCDQCAKRFTRHENLTRHKACH) and 59–82 (IPCPYCEIKCKRKDLLKRHIQRFH). Threonine 553 is modified (phosphothreonine).

Its subcellular location is the nucleus. In Schizosaccharomyces pombe (strain 972 / ATCC 24843) (Fission yeast), this protein is Zinc finger protein C11D3.17.